The chain runs to 646 residues: MSTTNEETQANASKDYSEDALKMSYAAQPLDIMRALKLIEYYESKDDYDNSRKLYAELHERFPLYSPLWTMHLQSELQRNEFDTVEKLLAQCLAGDLENNDLSLWSTYLDYVRRKNNLITGGQEARAVVIKAFKLVMDKCATFEPKASSFWNDYLGFLHQWKPMNKWEEQQRLDMIREVYKKMLCVPFDKLEKMWNQYTLWEQETNTLTARKFIGELSADYMKARSIYQELLNVTANIRRTSPLNLRTANKNNIPQYVLPCKKNDHTQLEAWLKWIAWEKENKLELTEDALKDRVTYVYKQAIQQLLFEPEIWYDYVMYEFDNDAARKNILKVALQANPTSPTLTFKLAECYEVENKSEEVQNCFEKTIDELLRQYKNDNGNDELSSDIIWERKTLTYIYCIYMNTMKRLSGLSAARAVFGKCRKLKKAMTHDIYVENAYLEFQNQNDHKTASKVLELGLKYFGDDGEYINKYMDFLSLLNRGSQMKTLFETSIEKVEDLRQLKKIYVKMIGYESKYGNLNNVYQLEKRFFEKFPDTDLIQLFSTRYKIQDDNKIKNLELTYKLPDIISSDGDPSGVDKSFKKRQIENDENLPDSKRQKSQPLLPKEILDILAVLPKKQYFKNAFLDPSNLVNYLNEQVKLADEEN.

HAT repeat units follow at residues 46–78 (DDYD…SELQ), 80–114 (NEFD…YVRR), 128–160 (VVIK…FLHQ), 171–204 (QRLD…WEQE), 249–281 (ANKN…WEKE), and 290–322 (ALKD…YEFD). The interval 571–599 (DGDPSGVDKSFKKRQIENDENLPDSKRQK) is disordered.

It localises to the nucleus. The protein resides in the cytoplasm. Component of the cleavage factor IA (CFIA) complex, which is involved in the endonucleolytic cleavage during polyadenylation-dependent pre-mRNA 3'-end formation. The polypeptide is mRNA 3'-end-processing protein RNA14 (RNA14) (Candida glabrata (strain ATCC 2001 / BCRC 20586 / JCM 3761 / NBRC 0622 / NRRL Y-65 / CBS 138) (Yeast)).